We begin with the raw amino-acid sequence, 450 residues long: C4-dicarboxylate transport protein (450 aa).

The next 9 helical transmembrane spans lie at 10–30 (SLYF…HFYP), 46–66 (LIKM…IAGM), 78–98 (YALL…LIVV), 143–163 (IVGA…VIFG), 190–210 (IINM…AFTI), 224–244 (LMIC…GAIA), 291–311 (VVGL…SIYL), 332–352 (ITLL…TGSG), and 354–374 (IVLA…LALI). The tract at residues 428-450 (PEDDLGVAEGPTPGAAVNTTKTV) is disordered.

This sequence belongs to the dicarboxylate/amino acid:cation symporter (DAACS) (TC 2.A.23) family.

Its subcellular location is the cell inner membrane. Functionally, responsible for the transport of dicarboxylates such as succinate, fumarate, and malate from the periplasm across the membrane. The protein is C4-dicarboxylate transport protein of Pseudomonas syringae pv. syringae (strain B728a).